Consider the following 2005-residue polypeptide: Sodium channel protein type 2 subunit alpha (2005 aa).

The Cytoplasmic portion of the chain corresponds to 1 to 129 (MARSVLVPPG…KLAIKILVHS (129 aa)). Phosphoserine is present on Ser4. The interval 28-61 (RIAEEKAKRPKQERKDEDDENGPKPNSDLEAGKS) is disordered. A Glycyl lysine isopeptide (Lys-Gly) (interchain with G-Cter in SUMO1) cross-link involves residue Lys38. One copy of the I repeat lies at 111 to 456 (ILTPFNPIRK…QQMLEQLKKQ (346 aa)). The chain crosses the membrane as a helical span at residues 130–148 (LFNVLIMCTILTNCVFMTM). The Extracellular segment spans residues 149-155 (SNPPDWT). The chain crosses the membrane as a helical span at residues 156–176 (KNVEYTFTGIYTFESLIKILA). Residues 177 to 190 (RGFCLEDFTFLRNP) are Cytoplasmic-facing. Residues 191–208 (WNWLDFTVITFAYVTEFV) form a helical membrane-spanning segment. The Extracellular segment spans residues 209–214 (NLGNVS). Asn212 is a glycosylation site (N-linked (GlcNAc...) asparagine). A helical transmembrane segment spans residues 215 to 231 (ALRTFRVLRALKTISVI). Topologically, residues 232–250 (PGLKTIVGALIQSVKKLSD) are cytoplasmic. A helical transmembrane segment spans residues 251 to 270 (VMILTVFCLSVFALIGLQLF). Residues 271–369 (MGNLRNKCLQ…PNYGYTSFDT (99 aa)) lie on the Extracellular side of the membrane. The cysteines at positions 278 and 338 are disulfide-linked. N-linked (GlcNAc...) asparagine glycans are attached at residues Asn285, Asn291, Asn297, Asn303, Asn308, and Asn340. An intramembrane region (pore-forming) is located at residues 370 to 394 (FSWAFLSLFRLMTQDFWENLYQLTL). Residues 395-401 (RAAGKTY) lie on the Extracellular side of the membrane. Residues 402–422 (MIFFVLVIFLGSFYLINLILA) traverse the membrane as a helical segment. Over 423–759 (VVAMAYEEQN…HVVNLVVMDP (337 aa)) the chain is Cytoplasmic. Phosphoserine is present on residues Ser468, Ser471, Ser484, Ser526, Ser528, Ser531, Ser553, Ser554, and Ser558. The disordered stretch occupies residues 494 to 529 (SSKSEKELKNRRKKKKQKEQAGEEEKEDAVRKSASE). The span at 511-529 (KEQAGEEEKEDAVRKSASE) shows a compositional bias: basic and acidic residues. Ser554 bears the Phosphoserine; by PKC; in vitro mark. Ser573 and Ser576 each carry phosphoserine; by PKC; in vitro. Residues Ser589, Ser610, Ser623, Ser687, Ser688, and Ser721 each carry the phosphoserine modification. The interval 591-634 (NDFADDEHSTFEDNDSRRDSLFVPHRHGERRPSNVSQASRASRG) is disordered. A compositionally biased stretch (basic and acidic residues) spans 596–610 (DEHSTFEDNDSRRDS). An II repeat occupies 741–1013 (CCKPWLKVKH…QIAVGRMQKG (273 aa)). The chain crosses the membrane as a helical span at residues 760 to 778 (FVDLAITICIVLNTLFMAM). The Extracellular portion of the chain corresponds to 779–789 (EHYPMTEQFSS). The helical transmembrane segment at 790-809 (VLSVGNLVFTGIFTAEMFLK) threads the bilayer. At 810–823 (IIAMDPYYYFQEGW) the chain is on the cytoplasmic side. Residues 824–843 (NIFDGFIVSLSLMELGLANV) traverse the membrane as a helical segment. Over 844–845 (EG) the chain is Extracellular. The chain crosses the membrane as a helical span at residues 846–863 (LSVLRSFRLLRVFKLAKS). At 864–879 (WPTLNMLIKIIGNSVG) the chain is on the cytoplasmic side. The chain crosses the membrane as a helical span at residues 880-898 (ALGNLTLVLAIIVFIFAVV). Residues 899–927 (GMQLFGKSYKECVCKISNDCELPRWHMHH) are Extracellular-facing. Cys912 and Cys918 form a disulfide bridge. The tract at residues 917-918 (DC) is binds SCN2B. An intramembrane region (pore-forming) is located at residues 928-948 (FFHSFLIVFRVLCGEWIETMW). The Extracellular portion of the chain corresponds to 949–961 (DCMEVAGQTMCLT). A disulfide bond links Cys950 and Cys959. Residues 962–982 (VFMMVMVIGNLVVLNLFLALL) form a helical membrane-spanning segment. Over 983–1209 (LSSFSSDNLA…TCYKIVEHNW (227 aa)) the chain is Cytoplasmic. Residues 1120–1166 (EEFSSESDMEESKEKLNATSSSEGSTVDIGAPAEGEQPEAEPEESLE) form a disordered region. The span at 1155–1166 (EQPEAEPEESLE) shows a compositional bias: acidic residues. The stretch at 1190–1504 (KGKLWWNLRK…KKYYNAMKKL (315 aa)) is one III repeat. Residues 1210–1227 (FETFIVFMILLSSGALAF) traverse the membrane as a helical segment. The Extracellular segment spans residues 1228–1240 (EDIYIEQRKTIKT). A helical transmembrane segment spans residues 1241 to 1259 (MLEYADKVFTYIFILEMLL). At 1260-1273 (KWVAYGFQMYFTNA) the chain is on the cytoplasmic side. The chain crosses the membrane as a helical span at residues 1274-1292 (WCWLDFLIVDVSLVSLTAN). The Extracellular portion of the chain corresponds to 1293 to 1300 (ALGYSELG). The helical transmembrane segment at 1301–1319 (AIKSLRTLRALRPLRALSR) threads the bilayer. Topologically, residues 1320-1336 (FEGMRVVVNALLGAIPS) are cytoplasmic. A helical membrane pass occupies residues 1337–1356 (IMNVLLVCLIFWLIFSIMGV). Topologically, residues 1357–1408 (NLFAGKFYHCINYTTGEMFDVSVVNNYSECQALIESNQTARWKNVKVNFDNV) are extracellular. Cys1366 and Cys1386 are oxidised to a cystine. Residues Asn1368, Asn1382, and Asn1393 are each glycosylated (N-linked (GlcNAc...) asparagine). Residues 1409 to 1430 (GLGYLSLLQVATFKGWMDIMYA) constitute an intramembrane region (pore-forming). The Extracellular segment spans residues 1431–1447 (AVDSRNVELQPKYEDNL). Residues 1448–1469 (YMYLYFVIFIIFGSFFTLNLFI) form a helical membrane-spanning segment. The Cytoplasmic portion of the chain corresponds to 1470–1532 (GVIIDNFNQQ…MVFDFVTKQV (63 aa)). Position 1506 is a phosphoserine; by PKC (Ser1506). Residues 1513 to 1811 (IPRPANKFQG…WEKFDPDATQ (299 aa)) form an IV repeat. A helical membrane pass occupies residues 1533-1550 (FDISIMILICLNMVTMMV). The Extracellular segment spans residues 1551-1561 (ETDDQSQEMTN). The chain crosses the membrane as a helical span at residues 1562-1580 (ILYWINLVFIVLFTGECVL). Residues 1581–1592 (KLISLRHYYFTI) lie on the Cytoplasmic side of the membrane. Residues 1593–1610 (GWNIFDFVVVILSIVGMF) traverse the membrane as a helical segment. Over 1611–1623 (LAELIEKYFVSPT) the chain is Extracellular. Residues 1624–1640 (LFRVIRLARIGRILRLI) form a helical membrane-spanning segment. The Cytoplasmic portion of the chain corresponds to 1641-1659 (KGAKGIRTLLFALMMSLPA). The helical transmembrane segment at 1660–1677 (LFNIGLLLFLVMFIYAIF) threads the bilayer. The Extracellular portion of the chain corresponds to 1678–1699 (GMSNFAYVKREVGIDDMFNFET). Positions 1700–1722 (FGNSMICLFQITTSAGWDGLLAP) form an intramembrane region, pore-forming. Over 1723 to 1752 (ILNSGPPDCDPEKDHPGSSVKGDCGNPSVG) the chain is Extracellular. A disulfide bond links Cys1731 and Cys1746. The helical transmembrane segment at 1753-1775 (IFFFVSYIIISFLVVVNMYIAVI) threads the bilayer. Residues 1776 to 2005 (LENFSVATEE…KGKDIRESKK (230 aa)) are Cytoplasmic-facing. In terms of domain architecture, IQ spans 1905–1934 (EEVSAIVIQRAYRRYLLKQKVKKVSSIYKK). Ser1930 is subject to Phosphoserine. Residues 1933–1964 (KKDKGKEDEGTPIKEDIITDKLNENSTPEKTD) are compositionally biased toward basic and acidic residues. The disordered stretch occupies residues 1933-2005 (KKDKGKEDEG…KGKDIRESKK (73 aa)). Residues Thr1943, Thr1963, and Thr1966 each carry the phosphothreonine modification. Position 1971 is a phosphoserine (Ser1971). The span at 1979 to 2005 (TKPEKEKFEKDKSEKEDKGKDIRESKK) shows a compositional bias: basic and acidic residues.

It belongs to the sodium channel (TC 1.A.1.10) family. Nav1.2/SCN2A subfamily. In terms of assembly, heterooligomer of a large alpha subunit and a smaller beta subunit. Heterooligomer with SCN2B or SCN4B; disulfide-linked. Heterooligomer with SCN1B or SCN3B; non-covalently linked. Interacts with NEDD4L. Interacts with CALM. Interacts with TMEM233. Interacts with the conotoxin GVIIJ. Interacts with the scorpion toxin BMK M1. May be ubiquitinated by NEDD4L; which would promote its endocytosis. In terms of processing, phosphorylation at Ser-1506 by PKC in a highly conserved cytoplasmic loop slows inactivation of the sodium channel and reduces peak sodium currents. Post-translationally, sumoylated at Lys-38. Sumoylation is induced by hypoxia, increases voltage-gated sodium current and mediates the early response to acute hypoxia in neurons. Sumoylated SCN2A is located at the cell membrane. In terms of tissue distribution, expressed in brain (at protein level). Expressed in cerebellar granule neurons (at protein level).

It localises to the cell membrane. It catalyses the reaction Na(+)(in) = Na(+)(out). Functionally, mediates the voltage-dependent sodium ion permeability of excitable membranes. Assuming opened or closed conformations in response to the voltage difference across the membrane, the protein forms a sodium-selective channel through which Na(+) ions may pass in accordance with their electrochemical gradient. Implicated in the regulation of hippocampal replay occurring within sharp wave ripples (SPW-R) important for memory. This Rattus norvegicus (Rat) protein is Sodium channel protein type 2 subunit alpha.